A 612-amino-acid polypeptide reads, in one-letter code: Proton pump-interactor 1 (612 aa).

Positions 1 to 58 (MGVEVVNSGGFEVAPAPFEGKPEKNGKLDQGKGDDAPINFGSVGELPKNAEENNNKVV) are disordered. A compositionally biased stretch (basic and acidic residues) spans 20 to 35 (GKPEKNGKLDQGKGDD). Coiled-coil stretches lie at residues 90 to 113 (PKIK…RTGV) and 251 to 314 (LDGV…NSEY). 4 stretches are compositionally biased toward basic and acidic residues: residues 374 to 387 (LSRD…DEKP), 434 to 446 (EKAK…KNVA), 459 to 498 (PQKE…EKAA), and 505 to 519 (AQKE…EQEK). Residues 374–572 (LSRDGRMRNP…PIRNRTRGRG (199 aa)) are disordered. A coiled-coil region spans residues 466 to 526 (VDAATAKEMR…QEKKAKKKTG (61 aa)). Residues 531-545 (TETEEVPEASEEEIE) show a composition bias toward acidic residues. S540 is subject to Phosphoserine. The segment covering 549–564 (QEEKPQKEKVFKEKPI) has biased composition (basic and acidic residues). Residues 591–611 (VYAAPAALVVLLLLVLGYYYV) traverse the membrane as a helical segment.

Belongs to the plant Proton pump-interactor protein family. As to quaternary structure, interacts with AHA1 via N-terminal region. Strongly expressed in root and shoot vascular systems, particularly in meristematic and sink tissues. Also present in pollen, stigmas and siliques, but not in developing embryos.

It localises to the cell membrane. The protein localises to the endoplasmic reticulum membrane. In terms of biological role, promotes AHA1 plasma membrane ATPase activity by binding to a site different from the 14-3-3 binding site. This Arabidopsis thaliana (Mouse-ear cress) protein is Proton pump-interactor 1 (PPI1).